The primary structure comprises 227 residues: Zinc finger protein ZAT10 (227 aa).

A C2H2-type 1 zinc finger spans residues 80–102; the sequence is YKCSVCDKTFSSYQALGGHKASH. The interval 96–128 is disordered; sequence GGHKASHRKNLSQTLSGGGDDHSTSSATTTSAV. Over residues 119-128 the composition is skewed to low complexity; sequence TSSATTTSAV. A C2H2-type 2 zinc finger spans residues 136–158; it reads HVCTICNKSFPSGQALGGHKRCH. The segment at 168–189 is disordered; that stretch reads SSVSNSEGAGSTSHVSSSHRGF. Residues 174-186 show a composition bias toward polar residues; that stretch reads EGAGSTSHVSSSH.

Expressed in roots, stems and leaves.

It localises to the nucleus. In terms of biological role, transcriptional repressor involved in abiotic stress responses. Can repress the stress responsive genes DREB1A and LTI78. Probably involved in jasmonate (JA) early signaling response. May regulate the expression of the JA biosynthesis gene LOX3 and control the expression of TIFY10A/JAZ1, a key repressor in the JA signaling cascade. The chain is Zinc finger protein ZAT10 (ZAT10) from Arabidopsis thaliana (Mouse-ear cress).